We begin with the raw amino-acid sequence, 458 residues long: Phosphoglucosamine mutase (458 aa).

Catalysis depends on Ser-106, which acts as the Phosphoserine intermediate. Residues Ser-106, Asp-247, Asp-249, and Asp-251 each contribute to the Mg(2+) site. Position 106 is a phosphoserine (Ser-106).

The protein belongs to the phosphohexose mutase family. Requires Mg(2+) as cofactor. In terms of processing, activated by phosphorylation.

It carries out the reaction alpha-D-glucosamine 1-phosphate = D-glucosamine 6-phosphate. Functionally, catalyzes the conversion of glucosamine-6-phosphate to glucosamine-1-phosphate. The polypeptide is Phosphoglucosamine mutase (Chlamydia pneumoniae (Chlamydophila pneumoniae)).